Reading from the N-terminus, the 414-residue chain is Arrestin domain-containing protein 3 (414 aa).

Short sequence motifs (PPxY motif) lie at residues 346 to 349 and 391 to 394; these read PPSY and PPLY. The tract at residues 393–414 is disordered; that stretch reads LYSEIDPNPDQSSEDRPSCPSR. Residues 405–414 show a composition bias toward basic and acidic residues; sequence SEDRPSCPSR.

This sequence belongs to the arrestin family. As to quaternary structure, interacts (via PPxY motifs) with NEDD4 (via WW domains). Interacts with ADRB2. Interacts with ADRB3. Interacts with HGS (via PPxY motifs). Does not bind TXN (thioredoxin). Interacts with ITCH.

It localises to the cytoplasm. It is found in the cell membrane. The protein resides in the lysosome. The protein localises to the endosome. Its subcellular location is the early endosome. In terms of biological role, adapter protein that plays a role in regulating cell-surface expression of adrenergic receptors and probably also other G protein-coupled receptors. Plays a role in NEDD4-mediated ubiquitination and endocytosis af activated ADRB2 and subsequent ADRB2 degradation. May recruit NEDD4 to ADRB2. Alternatively, may function as adapter protein that does not play a major role in recruiting NEDD4 to ADRB2, but rather plays a role in a targeting ADRB2 to endosomes. This chain is Arrestin domain-containing protein 3 (Arrdc3), found in Rattus norvegicus (Rat).